The following is a 121-amino-acid chain: ATP synthase epsilon chain (121 aa).

The protein belongs to the ATPase epsilon chain family. In terms of assembly, F-type ATPases have 2 components, CF(1) - the catalytic core - and CF(0) - the membrane proton channel. CF(1) has five subunits: alpha(3), beta(3), gamma(1), delta(1), epsilon(1). CF(0) has three main subunits: a, b and c.

Its subcellular location is the cell membrane. In terms of biological role, produces ATP from ADP in the presence of a proton gradient across the membrane. The sequence is that of ATP synthase epsilon chain from Mycobacterium leprae (strain Br4923).